We begin with the raw amino-acid sequence, 243 residues long: uncharacterized protein (243 aa).

This sequence belongs to the ycf23 family.

It is found in the plastid. The protein resides in the cyanelle. This is an uncharacterized protein from Cyanophora paradoxa.